The chain runs to 234 residues: Large ribosomal subunit protein uL1 (234 aa).

The protein belongs to the universal ribosomal protein uL1 family. Part of the 50S ribosomal subunit.

Functionally, binds directly to 23S rRNA. The L1 stalk is quite mobile in the ribosome, and is involved in E site tRNA release. Protein L1 is also a translational repressor protein, it controls the translation of the L11 operon by binding to its mRNA. The chain is Large ribosomal subunit protein uL1 from Vibrio atlanticus (strain LGP32) (Vibrio splendidus (strain Mel32)).